Here is a 209-residue protein sequence, read N- to C-terminus: MASLLARPQQAVVRAAKPAAARPLRLVVRASAQKPQQQLAQLAKPALSAIVANALMAMPAAAEAGKIFDFNLTLPVMAGEFLLLMVFLEKTWFTPVGKVLDERDNLIRSKLGSVKDNTGDVDKLVLEAETILKSARSDVSAMINTKKAAKQSELDKTYNEAKAKITAEVESSIAGLEQESASMLKSLDAQVDKISAEVLKRVLPEGVRV.

Residues 1-62 (MASLLARPQQ…NALMAMPAAA (62 aa)) constitute a chloroplast transit peptide. A helical membrane pass occupies residues 67 to 87 (IFDFNLTLPVMAGEFLLLMVF).

It belongs to the ATPase B chain family. F-type ATPases have 2 components, F(1) - the catalytic core - and F(0) - the membrane proton channel. F(1) has five subunits: alpha(3), beta(3), gamma(1), delta(1), epsilon(1). F(0) has four main subunits: a(1), b(1), b'(1) and c(10-14). The alpha and beta chains form an alternating ring which encloses part of the gamma chain. F(1) is attached to F(0) by a central stalk formed by the gamma and epsilon chains, while a peripheral stalk is formed by the delta, b and b' chains.

It is found in the plastid. The protein localises to the chloroplast thylakoid membrane. Functionally, f(1)F(0) ATP synthase produces ATP from ADP in the presence of a proton or sodium gradient. F-type ATPases consist of two structural domains, F(1) containing the extramembraneous catalytic core and F(0) containing the membrane proton channel, linked together by a central stalk and a peripheral stalk. During catalysis, ATP synthesis in the catalytic domain of F(1) is coupled via a rotary mechanism of the central stalk subunits to proton translocation. Its function is as follows. Component of the F(0) channel, it forms part of the peripheral stalk, linking F(1) to F(0). The b'-subunit is a diverged and duplicated form of b found in plants and photosynthetic bacteria. The protein is ATP synthase subunit b', chloroplastic of Chlamydomonas reinhardtii (Chlamydomonas smithii).